A 354-amino-acid chain; its full sequence is Muscleblind-like protein 3 (354 aa).

4 consecutive C3H1-type zinc fingers follow at residues 14–42, 48–74, 174–202, and 210–236; these read WLTLEVCREFQRGTCSRADADCKFAHPPR, NGRVVACFDSLKGRCTRENCKYLHPPP, SDKLEVCREFQRGNCTRGENDCRYAHPTD, and DNTVTICMDYIKGRCSREKCKYFHPPA.

Belongs to the muscleblind family. Highly expressed in the placenta.

It localises to the nucleus. The protein localises to the cytoplasm. Mediates pre-mRNA alternative splicing regulation. Acts either as activator or repressor of splicing on specific pre-mRNA targets. Inhibits cardiac troponin-T (TNNT2) pre-mRNA exon inclusion but induces insulin receptor (IR) pre-mRNA exon inclusion in muscle. Antagonizes the alternative splicing activity pattern of CELF proteins. May play a role in myotonic dystrophy pathophysiology (DM). Could inhibit terminal muscle differentiation, acting at approximately the time of myogenin induction. The sequence is that of Muscleblind-like protein 3 (MBNL3) from Homo sapiens (Human).